Here is a 199-residue protein sequence, read N- to C-terminus: Probable adenine phosphoribosyltransferase (199 aa).

This sequence belongs to the purine/pyrimidine phosphoribosyltransferase family. In terms of assembly, homodimer.

Its subcellular location is the cytoplasm. The enzyme catalyses AMP + diphosphate = 5-phospho-alpha-D-ribose 1-diphosphate + adenine. The protein operates within purine metabolism; AMP biosynthesis via salvage pathway; AMP from adenine: step 1/1. Its function is as follows. Catalyzes a salvage reaction resulting in the formation of AMP, that is energically less costly than de novo synthesis. The chain is Probable adenine phosphoribosyltransferase (aprt) from Dictyostelium discoideum (Social amoeba).